Here is a 501-residue protein sequence, read N- to C-terminus: Lysine--tRNA ligase (501 aa).

Glutamate 411 and glutamate 418 together coordinate Mg(2+).

It belongs to the class-II aminoacyl-tRNA synthetase family. In terms of assembly, homodimer. Requires Mg(2+) as cofactor.

It is found in the cytoplasm. It catalyses the reaction tRNA(Lys) + L-lysine + ATP = L-lysyl-tRNA(Lys) + AMP + diphosphate. In Pseudomonas aeruginosa (strain LESB58), this protein is Lysine--tRNA ligase.